The primary structure comprises 477 residues: MQVLHVCSELFPLLKTGGLADVVGALPAAQIAAGDDTRVLLPAFPDLKKGITQIQVVAQLQTFAGYVELHFGHFNGVGIYLIDAPGLYDRPGSPYHDESQYAYSDNYLRFALLGWVSCELACGLDPWWRPEVVHAHDWHAGLSCAYLAARGRPAKSVFTVHNLAYQGLFNARHMEQIQLPHSFFDVYGMEFHGQISYLKAGLFYADHVTAVSPTYAREITQPEFGYGMEGLLKQRLLEGRLSGILNGVDPAIWNPAHDLLLAARYNRDVLDAKRENKRQLQIAMGLKIDEKAPIFAVVSRLTKQKGLDLVLEALPGLLEQGGQLVVLGAGDAELQQGFLAAAAENPGQVGVQIGYHEAFSHRIMGGADVILVPSRFEPCGLTQLYALKYGTLPLVRRTGGLADTVNDCSLENLADGIASGFSFEDSNAWSLLRAIRRSFVLWSRPSLWRYVQRQAMGMDFSWQVAAVAYRDLYQRLL.

Lysine 15 contributes to the ADP-alpha-D-glucose binding site.

Belongs to the glycosyltransferase 1 family. Bacterial/plant glycogen synthase subfamily.

The enzyme catalyses [(1-&gt;4)-alpha-D-glucosyl](n) + ADP-alpha-D-glucose = [(1-&gt;4)-alpha-D-glucosyl](n+1) + ADP + H(+). Its pathway is glycan biosynthesis; glycogen biosynthesis. In terms of biological role, synthesizes alpha-1,4-glucan chains using ADP-glucose. The chain is Glycogen synthase from Erwinia tasmaniensis (strain DSM 17950 / CFBP 7177 / CIP 109463 / NCPPB 4357 / Et1/99).